The primary structure comprises 363 residues: UDP-N-acetylglucosamine--N-acetylmuramyl-(pentapeptide) pyrophosphoryl-undecaprenol N-acetylglucosamine transferase (363 aa).

UDP-N-acetyl-alpha-D-glucosamine-binding positions include 15–17, Asn127, Arg169, Ser197, Ile251, 270–275, and Gln296; these read TGG and ALTVSE.

The protein belongs to the glycosyltransferase 28 family. MurG subfamily.

Its subcellular location is the cell inner membrane. The enzyme catalyses di-trans,octa-cis-undecaprenyl diphospho-N-acetyl-alpha-D-muramoyl-L-alanyl-D-glutamyl-meso-2,6-diaminopimeloyl-D-alanyl-D-alanine + UDP-N-acetyl-alpha-D-glucosamine = di-trans,octa-cis-undecaprenyl diphospho-[N-acetyl-alpha-D-glucosaminyl-(1-&gt;4)]-N-acetyl-alpha-D-muramoyl-L-alanyl-D-glutamyl-meso-2,6-diaminopimeloyl-D-alanyl-D-alanine + UDP + H(+). Its pathway is cell wall biogenesis; peptidoglycan biosynthesis. Its function is as follows. Cell wall formation. Catalyzes the transfer of a GlcNAc subunit on undecaprenyl-pyrophosphoryl-MurNAc-pentapeptide (lipid intermediate I) to form undecaprenyl-pyrophosphoryl-MurNAc-(pentapeptide)GlcNAc (lipid intermediate II). This is UDP-N-acetylglucosamine--N-acetylmuramyl-(pentapeptide) pyrophosphoryl-undecaprenol N-acetylglucosamine transferase from Dichelobacter nodosus (strain VCS1703A).